Consider the following 335-residue polypeptide: UPF0353 protein Mjls_2492 (335 aa).

2 consecutive transmembrane segments (helical) span residues 18–38 (WFFL…IVAL) and 67–87 (LPAI…AGPT). The VWFA domain occupies 98–294 (VVMLVIDVSQ…EQLREVYANL (197 aa)). Residues 309–329 (VGWLRLGALVLALSALAALLL) traverse the membrane as a helical segment.

Belongs to the UPF0353 family.

It is found in the cell membrane. The sequence is that of UPF0353 protein Mjls_2492 from Mycobacterium sp. (strain JLS).